We begin with the raw amino-acid sequence, 122 residues long: UPF0102 protein Ping_1176 (122 aa).

It belongs to the UPF0102 family.

This chain is UPF0102 protein Ping_1176, found in Psychromonas ingrahamii (strain DSM 17664 / CCUG 51855 / 37).